The chain runs to 399 residues: Protein DDI1 homolog 2 (399 aa).

The region spanning 1-81 (MLLTVYCVRR…VILRQKENAD (81 aa)) is the Ubiquitin-like domain. The disordered stretch occupies residues 99–134 (IAVPGTSNPQQRQLPRTQAQHSSPGEMASSPQGLDN). Polar residues predominate over residues 103–131 (GTSNPQQRQLPRTQAQHSSPGEMASSPQG). A Phosphothreonine modification is found at threonine 104. 4 positions are modified to phosphoserine: serine 121, serine 128, serine 150, and serine 194. Aspartate 252 is an active-site residue. The Ubiquitin-binding motif lies at 376–395 (EEIADQELAEAIQKSAEDAE).

The protein belongs to the DDI1 family. As to quaternary structure, homodimer.

Its subcellular location is the cytoplasm. The protein resides in the cytosol. It localises to the chromosome. Aspartic protease that mediates the cleavage of NFE2L1/NRF1 at 'Leu-104', thereby promoting release of NFE2L1/NRF1 from the endoplasmic reticulum membrane. Ubiquitination of NFE2L1/NRF1 is a prerequisite for cleavage, suggesting that DDI2 specifically recognizes and binds ubiquitinated NFE2L1/NRF1. Seems to act as a proteasomal shuttle which links the proteasome and replication fork proteins like RTF2. Required, with DDI1, for cellular survival following replication stress. Together or redudantly with DDI1, removes RTF2 from stalled forks to allow cell cycle progression after replication stress and maintains genome integrity. The protein is Protein DDI1 homolog 2 of Mus musculus (Mouse).